Here is a 463-residue protein sequence, read N- to C-terminus: NEDD8-activating enzyme E1 catalytic subunit (463 aa).

The residue at position 2 (Ala2) is an N-acetylalanine. The segment at 53–70 (HPDFEPSTESLQFLLDTC) is interaction with UBE2M N-terminus. ATP contacts are provided by residues 100–124 (DMDT…GRPK) and 148–171 (IQDF…SIIA). 2 interaction with UBE2M N-terminus regions span residues 157–161 (RQFHI) and 192–217 (PSSI…LPGM). The tract at residues 227–229 (LYP) is interaction with NEDD8. Cys237 acts as the Glycyl thioester intermediate in catalysis. Interaction with NAE1 stretches follow at residues 242–248 (MPRLPEH) and 292–295 (YNIR). The interval 331 to 338 (IATSAYIP) is interaction with UBE2M N-terminus. The interaction with NEDD8 stretch occupies residues 352-357 (YTYTFE). The tract at residues 368–463 (SQLPQNIQFS…TVLFKLHFTS (96 aa)) is interaction with UBE2M core domain.

Belongs to the ubiquitin-activating E1 family. UBA3 subfamily. Heterodimer of UBA3 and NAE1. Interacts with NEDD8, UBE2F and UBE2M. Binds ESR1 and ESR2 with bound steroid ligand. Interacts with TBATA. In terms of tissue distribution, ubiquitously expressed.

The catalysed reaction is ATP + [NEDD8 protein] + [E1 NEDD8-activating enzyme]-L-cysteine = AMP + diphosphate + [E1 NEDD8-activating enzyme]-S-[NEDD8 protein]-yl-L-cysteine.. It participates in protein modification; protein neddylation. Its activity is regulated as follows. Binding of TP53BP2 to the regulatory subunit NAE1 decreases activity. Its function is as follows. Catalytic subunit of the dimeric UBA3-NAE1 E1 enzyme. E1 activates NEDD8 by first adenylating its C-terminal glycine residue with ATP, thereafter linking this residue to the side chain of the catalytic cysteine, yielding a NEDD8-UBA3 thioester and free AMP. E1 finally transfers NEDD8 to the catalytic cysteine of UBE2M. Down-regulates steroid receptor activity. Necessary for cell cycle progression. The protein is NEDD8-activating enzyme E1 catalytic subunit (UBA3) of Homo sapiens (Human).